The chain runs to 497 residues: Zinc finger protein ZIC 2-B (497 aa).

Disordered regions lie at residues 58–107 (HMGA…TSQA) and 143–180 (SAAA…PQGH). Residues 66 to 88 (PGGGSGGGSGGGGGAGPNGGAGA) show a composition bias toward gly residues. A compositionally biased stretch (polar residues) spans 97-107 (PGQTSAFTSQA). Residues 161–171 (LHHHPHHHHQL) are compositionally biased toward basic residues. The segment at 273-308 (LICKWIDPEQLNNPKKSCNKTFSTMHELVTHMSVEH) adopts a C2H2-type 1; atypical zinc-finger fold. Residues 317–344 (HICFWEECAREGKPFKAKYKLVNHIRVH) form a C2H2-type 2; atypical zinc finger. 3 consecutive C2H2-type zinc fingers follow at residues 350–374 (FPCP…KRTH), 380–404 (FQCE…MHVH), and 410–432 (YLCK…MKVH). The tract at residues 423 to 473 (SSLRKHMKVHESSPQGSESSPAASSGYESSTPPGLVSPNSETQNPNLSPAA) is disordered. The span at 434–452 (SSPQGSESSPAASSGYESS) shows a compositional bias: low complexity. Positions 459 to 469 (SPNSETQNPNL) are enriched in polar residues.

Belongs to the GLI C2H2-type zinc-finger protein family.

The protein localises to the nucleus. Its subcellular location is the cytoplasm. Its function is as follows. Transcriptional repressor that inhibits neurogenesis and induces neural and neural crest differentiation. Regulates anteroposterior patterning in early development by inhibiting expression of the nodal genes through the inhibition of vegt. Required for gastrulation movements and for proper anterior neural and axial development. May also act as a transcriptional activator. May bind to the minimal GLI-consensus sequence 5'-TGGGTGGTC-3'. This Xenopus laevis (African clawed frog) protein is Zinc finger protein ZIC 2-B (zic2-b).